A 659-amino-acid polypeptide reads, in one-letter code: DNA ligase (659 aa).

NAD(+)-binding positions include 32–36 (DFEYD), 81–82 (SL), and E111. The active-site N6-AMP-lysine intermediate is the K113. R134, E168, K280, and K304 together coordinate NAD(+). C398, C401, C416, and C421 together coordinate Zn(2+). The BRCT domain occupies 585–655 (ETNSIYFQKR…KELNIPIINE (71 aa)).

It belongs to the NAD-dependent DNA ligase family. LigA subfamily. Mg(2+) serves as cofactor. Requires Mn(2+) as cofactor.

It catalyses the reaction NAD(+) + (deoxyribonucleotide)n-3'-hydroxyl + 5'-phospho-(deoxyribonucleotide)m = (deoxyribonucleotide)n+m + AMP + beta-nicotinamide D-nucleotide.. In terms of biological role, DNA ligase that catalyzes the formation of phosphodiester linkages between 5'-phosphoryl and 3'-hydroxyl groups in double-stranded DNA using NAD as a coenzyme and as the energy source for the reaction. It is essential for DNA replication and repair of damaged DNA. The polypeptide is DNA ligase (Mycoplasma genitalium (strain ATCC 33530 / DSM 19775 / NCTC 10195 / G37) (Mycoplasmoides genitalium)).